A 467-amino-acid chain; its full sequence is UDP-N-acetylmuramate--L-alanine ligase (467 aa).

ATP is bound at residue 114 to 120 (GTHGKTT).

It belongs to the MurCDEF family.

Its subcellular location is the cytoplasm. The catalysed reaction is UDP-N-acetyl-alpha-D-muramate + L-alanine + ATP = UDP-N-acetyl-alpha-D-muramoyl-L-alanine + ADP + phosphate + H(+). It participates in cell wall biogenesis; peptidoglycan biosynthesis. Cell wall formation. In Nitrobacter hamburgensis (strain DSM 10229 / NCIMB 13809 / X14), this protein is UDP-N-acetylmuramate--L-alanine ligase.